A 133-amino-acid chain; its full sequence is Holo-[acyl-carrier-protein] synthase (133 aa).

Residues Asp-8 and Glu-57 each contribute to the Mg(2+) site.

This sequence belongs to the P-Pant transferase superfamily. AcpS family. It depends on Mg(2+) as a cofactor.

It is found in the cytoplasm. The catalysed reaction is apo-[ACP] + CoA = holo-[ACP] + adenosine 3',5'-bisphosphate + H(+). Its function is as follows. Transfers the 4'-phosphopantetheine moiety from coenzyme A to a Ser of acyl-carrier-protein. In Caulobacter vibrioides (strain ATCC 19089 / CIP 103742 / CB 15) (Caulobacter crescentus), this protein is Holo-[acyl-carrier-protein] synthase.